The primary structure comprises 49 residues: Glycolactin (49 aa).

The protein belongs to the pancreatic ribonuclease family. In terms of processing, glycosylated. Milk.

The protein localises to the secreted. In terms of biological role, manifests poly C-specific RNase activity toward yeast tRNA, elicits a dose-dependent inhibition of cell-free translation, inhibits formation of superoxide ions in vitro and inhibits the hemagglutinating activities of soybean lectin and Ricinus communis agglutinin 120. Inhibits HIV-1 reverse transcriptase. The sequence is that of Glycolactin from Bos taurus (Bovine).